The sequence spans 236 residues: MFRRRGVTLTKALLTAVCMLAAPLTQAISVGNLTFSLPSETDFVSKRVVNNNKSARIYRIAISAIDSPGSSELRTRPVDGELLFAPRQLALQAGESEYFKFYYHGPQDNRERYYRVSFREVPTRNLTKRSPTGGEVSTEPVVVMDTILVVRPRQVQFKWSFDQVTGTVSNTGNTWFKLLIKPGCDSTEEEGDAWYLRPEDVVHQPELRQPGNHYLVYNDKFIKISDSCPAKPPSAD.

A signal peptide spans M1 to A27.

This sequence belongs to the EcpB/EcpE family.

In terms of biological role, part of the ecpRABCDE operon, which encodes the E.coli common pilus (ECP). ECP is found in both commensal and pathogenic strains and plays a dual role in early-stage biofilm development and host cell recognition. In Escherichia coli O157:H7, this protein is Probable fimbrial chaperone EcpE (ecpE).